A 194-amino-acid chain; its full sequence is Peptidyl-tRNA hydrolase (194 aa).

Tyr17 contacts tRNA. The active-site Proton acceptor is His22. TRNA is bound by residues Tyr68, Asn70, and Asn116.

The protein belongs to the PTH family. As to quaternary structure, monomer.

It localises to the cytoplasm. It carries out the reaction an N-acyl-L-alpha-aminoacyl-tRNA + H2O = an N-acyl-L-amino acid + a tRNA + H(+). In terms of biological role, hydrolyzes ribosome-free peptidyl-tRNAs (with 1 or more amino acids incorporated), which drop off the ribosome during protein synthesis, or as a result of ribosome stalling. Its function is as follows. Catalyzes the release of premature peptidyl moieties from peptidyl-tRNA molecules trapped in stalled 50S ribosomal subunits, and thus maintains levels of free tRNAs and 50S ribosomes. The polypeptide is Peptidyl-tRNA hydrolase (Pseudomonas aeruginosa (strain LESB58)).